Consider the following 461-residue polypeptide: FAD-dependent monooxygenase nodY2 (461 aa).

FAD contacts are provided by E48 and R136. The active site involves R214. FAD-binding residues include D338 and G351.

This sequence belongs to the paxM FAD-dependent monooxygenase family. It depends on FAD as a cofactor.

Its pathway is secondary metabolite biosynthesis. In terms of biological role, FAD-dependent monooxygenase; part of the gene cluster that mediates the biosynthesis of the indole diterpenes nodulisporic acids (NA). Nodulisporic acid A (NAA) and its chemically modified derivatives are of particular significance because of their highly potent insecticidal activity against blood-feeding arthropods and lack of observable adverse effects on mammals, in particular the tremogenicity associated with the paspaline-derived IDTs is not observed. The geranylgeranyl diphosphate (GGPP) synthase ggs1, localized outside of the cluster, is proposed to catalyze the first step in nodulisporic acid biosynthesis via conversion of farnesyl pyrophosphate and isopentyl pyrophosphate into geranylgeranyl pyrophosphate (GGPP). Condensation of indole-3-glycerol phosphate with GGPP by the prenyl transferase nodC then forms 3-geranylgeranylindole (3-GGI). Epoxidation by the FAD-dependent monooxygenase nodM leads to a single-epoxidized-GGI that is substrate of the terpene cyclase nodB for cyclization to yield emindole SB. The terminal methyl carbon, C28, of emindole SB is then oxidized by the cytochrome P450 monooxygenase nodW to produce nodulisporic acid F (NAF), the pentacyclic core of NAA. NAF is converted to nodulisporic acid E (NAE) via prenylation. This step is probably performed by one of the indole diterpene prenyltransferases nodD1 or nodD2. Several oxidation steps performed by the FAD-linked oxidoreductase nodO and one of the cytochrome P450 monooxygenase nodR, nodX or nodZ further convert NAE to nodulisporic acid D (NAD). NAD is substrate of cytochrome P450 monooxygenase nodJ to produce the precursor of nodulisporic acid C (NAC), converted to NAC by one of the indole diterpene prenyltransferases nodD1 or nodD2. The FAD-dependent monooxygenase nodY2 then oxidizes NAC to nodulisporic acid B (NAB). Finally NAB is converted to NAA by one of the cytochrome P450 monooxygenases nodR, nodX or nodZ. The sequence is that of FAD-dependent monooxygenase nodY2 from Hypoxylon pulicicidum.